We begin with the raw amino-acid sequence, 807 residues long: Ribosome-releasing factor 2, mitochondrial (807 aa).

The N-terminal 18 residues, 1–18, are a transit peptide targeting the mitochondrion; it reads MFCRKYVFQTWKQLSRSY. Positions 27-315 constitute a tr-type G domain; the sequence is AKTRNIGIIA…GITKYLPSPL (289 aa). GTP-binding positions include 36–43, 100–104, and 154–157; these read AHIDAGKT, DTPGH, and NKMD.

This sequence belongs to the TRAFAC class translation factor GTPase superfamily. Classic translation factor GTPase family. EF-G/EF-2 subfamily.

Its subcellular location is the mitochondrion. Its function is as follows. Mitochondrial GTPase that mediates the disassembly of ribosomes from messenger RNA at the termination of mitochondrial protein biosynthesis. Not involved in the GTP-dependent ribosomal translocation step during translation elongation. This Candida albicans (strain SC5314 / ATCC MYA-2876) (Yeast) protein is Ribosome-releasing factor 2, mitochondrial.